Consider the following 594-residue polypeptide: Alanine--tRNA ligase (594 aa).

The Zn(2+) site is built by His-456, His-460, Cys-558, and His-562.

Belongs to the class-II aminoacyl-tRNA synthetase family. Requires Zn(2+) as cofactor.

The protein localises to the cytoplasm. It carries out the reaction tRNA(Ala) + L-alanine + ATP = L-alanyl-tRNA(Ala) + AMP + diphosphate. In terms of biological role, catalyzes the attachment of alanine to tRNA(Ala) in a two-step reaction: alanine is first activated by ATP to form Ala-AMP and then transferred to the acceptor end of tRNA(Ala). Also edits incorrectly charged Ser-tRNA(Ala) and Gly-tRNA(Ala) via its editing domain. This is Alanine--tRNA ligase (alaS) from Borreliella afzelii (strain PKo) (Borrelia afzelii).